Consider the following 354-residue polypeptide: Uroporphyrinogen decarboxylase (354 aa).

Substrate contacts are provided by residues 30–34 (RQAGR), aspartate 79, tyrosine 154, serine 209, and histidine 333.

The protein belongs to the uroporphyrinogen decarboxylase family. Homodimer.

The protein resides in the cytoplasm. The enzyme catalyses uroporphyrinogen III + 4 H(+) = coproporphyrinogen III + 4 CO2. The protein operates within porphyrin-containing compound metabolism; protoporphyrin-IX biosynthesis; coproporphyrinogen-III from 5-aminolevulinate: step 4/4. In terms of biological role, catalyzes the decarboxylation of four acetate groups of uroporphyrinogen-III to yield coproporphyrinogen-III. In Mycolicibacterium vanbaalenii (strain DSM 7251 / JCM 13017 / BCRC 16820 / KCTC 9966 / NRRL B-24157 / PYR-1) (Mycobacterium vanbaalenii), this protein is Uroporphyrinogen decarboxylase.